A 202-amino-acid polypeptide reads, in one-letter code: Small ribosomal subunit protein uS4 (202 aa).

Residues 18–42 (LPGLTRKAAKRSYPPGQHGQARRKR) are disordered. The region spanning 90 to 152 (NRLDNVCFRL…KPSKKLAETN (63 aa)) is the S4 RNA-binding domain.

It belongs to the universal ribosomal protein uS4 family. In terms of assembly, part of the 30S ribosomal subunit. Contacts protein S5. The interaction surface between S4 and S5 is involved in control of translational fidelity.

Functionally, one of the primary rRNA binding proteins, it binds directly to 16S rRNA where it nucleates assembly of the body of the 30S subunit. In terms of biological role, with S5 and S12 plays an important role in translational accuracy. This chain is Small ribosomal subunit protein uS4, found in Synechococcus sp. (strain RCC307).